A 679-amino-acid chain; its full sequence is UvrABC system protein B (679 aa).

The 152-residue stretch at 25–176 (EGVNGGERYQ…NLRGSLRDLV (152 aa)) folds into the Helicase ATP-binding domain. ATP is bound at residue 38-45 (GATGTGKT). The short motif at 91-114 (YYDYYQPEAYVPVSDTYIAKTASI) is the Beta-hairpin element. The region spanning 429–591 (QVDDLLGEIR…ITPTAAGKKA (163 aa)) is the Helicase C-terminal domain. Residues 638–673 (PELIDQLELKMKESAKKLDFEEAANLRDRIKKLRQK) enclose the UVR domain.

The protein belongs to the UvrB family. In terms of assembly, forms a heterotetramer with UvrA during the search for lesions. Interacts with UvrC in an incision complex.

Its subcellular location is the cytoplasm. The UvrABC repair system catalyzes the recognition and processing of DNA lesions. A damage recognition complex composed of 2 UvrA and 2 UvrB subunits scans DNA for abnormalities. Upon binding of the UvrA(2)B(2) complex to a putative damaged site, the DNA wraps around one UvrB monomer. DNA wrap is dependent on ATP binding by UvrB and probably causes local melting of the DNA helix, facilitating insertion of UvrB beta-hairpin between the DNA strands. Then UvrB probes one DNA strand for the presence of a lesion. If a lesion is found the UvrA subunits dissociate and the UvrB-DNA preincision complex is formed. This complex is subsequently bound by UvrC and the second UvrB is released. If no lesion is found, the DNA wraps around the other UvrB subunit that will check the other stand for damage. The polypeptide is UvrABC system protein B (Synechococcus sp. (strain CC9311)).